The following is a 187-amino-acid chain: Ribosome-recycling factor (187 aa).

This sequence belongs to the RRF family.

It localises to the cytoplasm. Its function is as follows. Responsible for the release of ribosomes from messenger RNA at the termination of protein biosynthesis. May increase the efficiency of translation by recycling ribosomes from one round of translation to another. In Flavobacterium johnsoniae (strain ATCC 17061 / DSM 2064 / JCM 8514 / BCRC 14874 / CCUG 350202 / NBRC 14942 / NCIMB 11054 / UW101) (Cytophaga johnsonae), this protein is Ribosome-recycling factor.